We begin with the raw amino-acid sequence, 856 residues long: Structure-specific endonuclease subunit SLX4 (856 aa).

The segment covering Met1–Ser19 has biased composition (polar residues). 9 disordered regions span residues Met1–Val24, Val38–Ile65, Val88–Ala121, Lys139–Leu202, Gly296–Gln326, Lys362–Pro392, Ser621–Asp640, Arg668–Pro689, and Asp715–Asp742. Low complexity predominate over residues Ser51–Ser60. Basic residues predominate over residues Lys139 to Arg152. Residues Gly296–Asp309 are compositionally biased toward polar residues. Polar residues predominate over residues Ser673–Asn686.

It belongs to the SLX4 family. As to quaternary structure, forms a heterodimer with SLX1. Post-translationally, phosphorylated in response to DNA damage.

Its subcellular location is the nucleus. Regulatory subunit of the SLX1-SLX4 structure-specific endonuclease that resolves DNA secondary structures generated during DNA repair and recombination. Has endonuclease activity towards branched DNA substrates, introducing single-strand cuts in duplex DNA close to junctions with ss-DNA. The polypeptide is Structure-specific endonuclease subunit SLX4 (Blastomyces gilchristii (strain SLH14081) (Blastomyces dermatitidis)).